A 352-amino-acid chain; its full sequence is NAD-dependent protein deacetylase sirtuin-2 (352 aa).

Ser-16 is subject to Phosphoserine. Residues 20–301 enclose the Deacetylase sirtuin-type domain; the sequence is RLLDELTLEG…LALAELLGWK (282 aa). Residues 48-52 and 58-60 each bind NAD(+); these read AGIST and DFR. Ser-63 is subject to Phosphoserine. 130–133 is an NAD(+) binding site; that stretch reads QNID. The active-site Proton acceptor is His-150. Residues Cys-158 and Cys-163 each coordinate Zn(2+). Residue Ser-170 is modified to Phosphoserine. Zn(2+)-binding residues include Cys-184 and Cys-187. NAD(+) is bound by residues 225-226, 249-251, and Cys-287; these read TS and NKE. The tract at residues 314–352 is disordered; it reads SIDAQSGAGVPNPSTSASPKKSPPPAKDEARTTEREKPQ. Over residues 324 to 333 the composition is skewed to low complexity; the sequence is PNPSTSASPK. Ser-331 and Ser-335 each carry phosphoserine. Residues 339–352 show a composition bias toward basic and acidic residues; sequence AKDEARTTEREKPQ.

Belongs to the sirtuin family. Class I subfamily. As to quaternary structure, interacts with CDC20, FOXO3 and FZR1. Associates with microtubules in primary cortical mature neurons. Homotrimer. Interacts (via both phosphorylated, unphosphorylated, active or inactive forms) with HDAC6; the interaction is necessary for the complex to interact with alpha-tubulin, suggesting that these proteins belong to a large complex that deacetylates the cytoskeleton. Interacts with FOXO1; the interaction is disrupted upon serum-starvation or oxidative stress, leading to increased level of acetylated FOXO1 and induction of autophagy. Interacts with RELA; the interaction occurs in the cytoplasm and is increased in a TNF-alpha-dependent manner. Interacts with HOXA10; the interaction is direct. Interacts with YWHAB and YWHAG; the interactions occur in a AKT-dependent manner and increase SIRT2-dependent TP53 deacetylation. Interacts with MAPK1/ERK2 and MAPK3/ERK1; the interactions increase SIRT2 stability and deacetylation activity. Interacts (phosphorylated form) with KMT5A isoform 2; the interaction is direct, stimulates KMT5A-mediated methyltransferase activity on histone at 'Lys-20' (H4K20me1) and is increased in a H(2)O(2)-induced oxidative stress-dependent manner. Interacts with G6PD; the interaction is enhanced by H(2)O(2) treatment. Interacts with a G1/S-specific cyclin E-CDK2 complex. Interacts with AURKA, CDK5R1 (p35 form) and CDK5 and HIF1A. Interacts with the tRNA ligase SARS1; recruited to the VEGFA promoter via interaction with SARS1. Interacts with BEX4; negatively regulates alpha-tubulin deacetylation by SIRT2. Interacts with MORN3; the interaction enhances the ubiquitination of p53/TP53. The cofactor is Zn(2+). Phosphorylated at phosphoserine and phosphothreonine. Phosphorylated at Ser-331 by a mitotic kinase CDK1/cyclin B at the G2/M transition; phosphorylation regulates the delay in cell-cycle progression. Phosphorylated at Ser-331 by a mitotic kinase G1/S-specific cyclin E/Cdk2 complex; phosphorylation inactivates SIRT2-mediated alpha-tubulin deacetylation and thereby negatively regulates cell adhesion, cell migration and neurite outgrowth during neuronal differentiation. Phosphorylated by cyclin A/Cdk2 and p35-Cdk5 complexes and to a lesser extent by the cyclin D3/Cdk4 and cyclin B/Cdk1, in vitro. Dephosphorylated at Ser-331 by CDC14A and CDC14B around early anaphase. Post-translationally, acetylated by EP300; acetylation leads both to the decreased of SIRT2-mediated alpha-tubulin deacetylase activity and SIRT2-mediated down-regulation of TP53 transcriptional activity. In terms of processing, ubiquitinated.

The protein resides in the nucleus. It localises to the cytoplasm. It is found in the perinuclear region. Its subcellular location is the cytoskeleton. The protein localises to the microtubule organizing center. The protein resides in the centrosome. It localises to the centriole. It is found in the spindle. Its subcellular location is the midbody. The protein localises to the chromosome. The protein resides in the perikaryon. It localises to the cell projection. It is found in the growth cone. Its subcellular location is the myelin membrane. It catalyses the reaction N(6)-acetyl-L-lysyl-[protein] + NAD(+) + H2O = 2''-O-acetyl-ADP-D-ribose + nicotinamide + L-lysyl-[protein]. It carries out the reaction N(6)-tetradecanoyl-L-lysyl-[protein] + NAD(+) + H2O = 2''-O-tetradecanoyl-ADP-D-ribose + nicotinamide + L-lysyl-[protein]. The enzyme catalyses N(6)-hexadecanoyl-L-lysyl-[protein] + NAD(+) + H2O = 2''-O-hexadecanoyl-ADP-D-ribose + nicotinamide + L-lysyl-[protein]. Its activity is regulated as follows. Inhibited by Sirtinol, A3 and M15 small molecules. Inhibited by nicotinamide. Inhibited by a macrocyclic peptide inhibitor S2iL5. Inhibited by EP300-induced acetylation. NAD-dependent protein deacetylase, which deacetylates internal lysines on histone and alpha-tubulin as well as many other proteins such as key transcription factors. Participates in the modulation of multiple and diverse biological processes such as cell cycle control, genomic integrity, microtubule dynamics, cell differentiation, metabolic networks, and autophagy. Plays a major role in the control of cell cycle progression and genomic stability. Functions in the antephase checkpoint preventing precocious mitotic entry in response to microtubule stress agents, and hence allowing proper inheritance of chromosomes. Positively regulates the anaphase promoting complex/cyclosome (APC/C) ubiquitin ligase complex activity by deacetylating CDC20 and FZR1, then allowing progression through mitosis. Associates both with chromatin at transcriptional start sites (TSSs) and enhancers of active genes. Plays a role in cell cycle and chromatin compaction through epigenetic modulation of the regulation of histone H4 'Lys-20' methylation (H4K20me1) during early mitosis. Specifically deacetylates histone H4 at 'Lys-16' (H4K16ac) between the G2/M transition and metaphase enabling H4K20me1 deposition by KMT5A leading to ulterior levels of H4K20me2 and H4K20me3 deposition throughout cell cycle, and mitotic S-phase progression. Deacetylates KMT5A modulating KMT5A chromatin localization during the mitotic stress response. Also deacetylates histone H3 at 'Lys-57' (H3K56ac) during the mitotic G2/M transition. During oocyte meiosis progression, may deacetylate histone H4 at 'Lys-16' (H4K16ac) and alpha-tubulin, regulating spindle assembly and chromosome alignment by influencing microtubule dynamics and kinetochore function. Deacetylates histone H4 at 'Lys-16' (H4K16ac) at the VEGFA promoter and thereby contributes to regulate expression of VEGFA, a key regulator of angiogenesis. Deacetylates alpha-tubulin at 'Lys-40' and hence controls neuronal motility, oligodendroglial cell arbor projection processes and proliferation of non-neuronal cells. Phosphorylation at Ser-368 by a G1/S-specific cyclin E-CDK2 complex inactivates SIRT2-mediated alpha-tubulin deacetylation, negatively regulating cell adhesion, cell migration and neurite outgrowth during neuronal differentiation. Deacetylates PARD3 and participates in the regulation of Schwann cell peripheral myelination formation during early postnatal development and during postinjury remyelination. Involved in several cellular metabolic pathways. Plays a role in the regulation of blood glucose homeostasis by deacetylating and stabilizing phosphoenolpyruvate carboxykinase PCK1 activity in response to low nutrient availability. Acts as a key regulator in the pentose phosphate pathway (PPP) by deacetylating and activating the glucose-6-phosphate G6PD enzyme, and therefore, stimulates the production of cytosolic NADPH to counteract oxidative damage. Maintains energy homeostasis in response to nutrient deprivation as well as energy expenditure by inhibiting adipogenesis and promoting lipolysis. Attenuates adipocyte differentiation by deacetylating and promoting FOXO1 interaction to PPARG and subsequent repression of PPARG-dependent transcriptional activity. Plays a role in the regulation of lysosome-mediated degradation of protein aggregates by autophagy in neuronal cells. Deacetylates FOXO1 in response to oxidative stress or serum deprivation, thereby negatively regulating FOXO1-mediated autophagy. Deacetylates a broad range of transcription factors and co-regulators regulating target gene expression. Deacetylates transcriptional factor FOXO3 stimulating the ubiquitin ligase SCF(SKP2)-mediated FOXO3 ubiquitination and degradation. Deacetylates HIF1A and therefore promotes HIF1A degradation and inhibition of HIF1A transcriptional activity in tumor cells in response to hypoxia. Deacetylates RELA in the cytoplasm inhibiting NF-kappaB-dependent transcription activation upon TNF-alpha stimulation. Inhibits transcriptional activation by deacetylating p53/TP53 and EP300. Also deacetylates EIF5A. Functions as a negative regulator on oxidative stress-tolerance in response to anoxia-reoxygenation conditions. Plays a role as tumor suppressor. In addition to protein deacetylase activity, also has activity toward long-chain fatty acyl groups and mediates protein-lysine demyristoylation and depalmitoylation of target proteins, such as ARF6 and KRAS, thereby regulating their association with membranes. In Pongo abelii (Sumatran orangutan), this protein is NAD-dependent protein deacetylase sirtuin-2 (SIRT2).